Here is a 270-residue protein sequence, read N- to C-terminus: 3-methyl-2-oxobutanoate hydroxymethyltransferase (270 aa).

2 residues coordinate Mg(2+): D41 and D80. Residues 41–42, D80, and K109 each bind 3-methyl-2-oxobutanoate; that span reads DS. Position 111 (E111) interacts with Mg(2+). E178 acts as the Proton acceptor in catalysis.

Belongs to the PanB family. As to quaternary structure, homodecamer; pentamer of dimers. Requires Mg(2+) as cofactor.

It localises to the cytoplasm. It catalyses the reaction 3-methyl-2-oxobutanoate + (6R)-5,10-methylene-5,6,7,8-tetrahydrofolate + H2O = 2-dehydropantoate + (6S)-5,6,7,8-tetrahydrofolate. Its pathway is cofactor biosynthesis; (R)-pantothenate biosynthesis; (R)-pantoate from 3-methyl-2-oxobutanoate: step 1/2. Its function is as follows. Catalyzes the reversible reaction in which hydroxymethyl group from 5,10-methylenetetrahydrofolate is transferred onto alpha-ketoisovalerate to form ketopantoate. In Thermotoga maritima (strain ATCC 43589 / DSM 3109 / JCM 10099 / NBRC 100826 / MSB8), this protein is 3-methyl-2-oxobutanoate hydroxymethyltransferase.